The following is a 112-amino-acid chain: Large ribosomal subunit protein P1 (112 aa).

Positions 80–112 are disordered; sequence AAAAPAAESKKEEKKKEEESDQSDDDMGFGLFD. Basic and acidic residues predominate over residues 87-97; sequence ESKKEEKKKEE. A phosphoserine mark is found at Ser-99 and Ser-102.

This sequence belongs to the eukaryotic ribosomal protein P1/P2 family. In terms of assembly, P1 and P2 exist as dimers at the large ribosomal subunit.

Functionally, plays an important role in the elongation step of protein synthesis. This Drosophila melanogaster (Fruit fly) protein is Large ribosomal subunit protein P1 (RpLP1).